The sequence spans 844 residues: DNA mismatch repair protein MutS (844 aa).

610-617 (GPNMGGKS) contributes to the ATP binding site.

The protein belongs to the DNA mismatch repair MutS family.

Its function is as follows. This protein is involved in the repair of mismatches in DNA. It is possible that it carries out the mismatch recognition step. This protein has a weak ATPase activity. This Francisella tularensis subsp. holarctica (strain FTNF002-00 / FTA) protein is DNA mismatch repair protein MutS.